A 160-amino-acid chain; its full sequence is M-phase phosphoprotein 6 (160 aa).

Residues Lys-37 and Lys-86 each participate in a glycyl lysine isopeptide (Lys-Gly) (interchain with G-Cter in SUMO2) cross-link. Phosphoserine is present on Ser-110. The Nuclear localization signal signature appears at 116 to 133 (RRYETLVGTIGKKFARKR). Lys-127 is covalently cross-linked (Glycyl lysine isopeptide (Lys-Gly) (interchain with G-Cter in SUMO2)). Thr-147 bears the Phosphothreonine mark. Residues Lys-150 and Lys-153 each participate in a glycyl lysine isopeptide (Lys-Gly) (interchain with G-Cter in SUMO2) cross-link.

It belongs to the MPP6 family. Associates with the RNA exosome complex, mediated by EXOSC3. Interacts with ARHGAP18. Interacts with exosome cofactors EXOSC10 and MTREX. In terms of processing, phosphorylated in M (mitotic) phase.

It is found in the nucleus. Its subcellular location is the nucleolus. It localises to the cytoplasm. RNA-binding protein that associates with the RNA exosome complex. Involved in the 3'-processing of the 7S pre-RNA to the mature 5.8S rRNA and play a role in recruiting the RNA exosome complex to pre-rRNA; this function may include C1D. This is M-phase phosphoprotein 6 from Homo sapiens (Human).